We begin with the raw amino-acid sequence, 148 residues long: MRAYHPTPATKTRALWREIGLPASRGTVLVDSIKMGFSVDVIDSIHLWASIPKAEILRATGIPSRSLTRRRTHDGRFTPEESERIARFVRVMDAAVDLFGGDKGKAITWMSTPIKGLGHRSPDSLLETETGALEVCDLIGRLEHGVFS.

It belongs to the MbcA/ParS/Xre antitoxin family. Homodimer. Forms a complex with cognate toxin Rse.

Antitoxin component of a type II toxin-antitoxin (TA) system. Neutralizes the activity of cognate toxin Res. The polypeptide is Antitoxin Xre (Yersinia enterocolitica serotype O:8 / biotype 1B (strain NCTC 13174 / 8081)).